Consider the following 93-residue polypeptide: MVMLMEQFIGIVKDILVLIASFGILLASYRLWIEKDRKNIIYARIHILGVIDCACFLIFIALGETLLAFVYLILAPFLAHAIAHAAYNDNLSE.

A run of 2 helical transmembrane segments spans residues 8 to 28 and 54 to 74; these read FIGI…LLAS and ACFL…YLIL.

It localises to the cell membrane. This is an uncharacterized protein from Methanocaldococcus jannaschii (strain ATCC 43067 / DSM 2661 / JAL-1 / JCM 10045 / NBRC 100440) (Methanococcus jannaschii).